Reading from the N-terminus, the 190-residue chain is ATP synthase subunit b (190 aa).

Residues 34–54 traverse the membrane as a helical segment; that stretch reads LDIFETNLINLAILVGILFYF.

This sequence belongs to the ATPase B chain family. As to quaternary structure, F-type ATPases have 2 components, F(1) - the catalytic core - and F(0) - the membrane proton channel. F(1) has five subunits: alpha(3), beta(3), gamma(1), delta(1), epsilon(1). F(0) has four main subunits: a(1), b(1), b'(1) and c(10-14). The alpha and beta chains form an alternating ring which encloses part of the gamma chain. F(1) is attached to F(0) by a central stalk formed by the gamma and epsilon chains, while a peripheral stalk is formed by the delta, b and b' chains.

It is found in the cellular thylakoid membrane. F(1)F(0) ATP synthase produces ATP from ADP in the presence of a proton or sodium gradient. F-type ATPases consist of two structural domains, F(1) containing the extramembraneous catalytic core and F(0) containing the membrane proton channel, linked together by a central stalk and a peripheral stalk. During catalysis, ATP synthesis in the catalytic domain of F(1) is coupled via a rotary mechanism of the central stalk subunits to proton translocation. In terms of biological role, component of the F(0) channel, it forms part of the peripheral stalk, linking F(1) to F(0). The polypeptide is ATP synthase subunit b (Nostoc punctiforme (strain ATCC 29133 / PCC 73102)).